The chain runs to 364 residues: Peptide chain release factor 2 (364 aa).

An N5-methylglutamine modification is found at Q251.

This sequence belongs to the prokaryotic/mitochondrial release factor family. Methylated by PrmC. Methylation increases the termination efficiency of RF2.

Its subcellular location is the cytoplasm. Its function is as follows. Peptide chain release factor 2 directs the termination of translation in response to the peptide chain termination codons UGA and UAA. The polypeptide is Peptide chain release factor 2 (Sulfurovum sp. (strain NBC37-1)).